Here is a 216-residue protein sequence, read N- to C-terminus: LexA repressor (216 aa).

The H-T-H motif DNA-binding region spans 28–48; the sequence is RAEIAAEFGFSSPNAAEEHLR. Active-site for autocatalytic cleavage activity residues include serine 134 and lysine 171.

Belongs to the peptidase S24 family. In terms of assembly, homodimer.

It catalyses the reaction Hydrolysis of Ala-|-Gly bond in repressor LexA.. Functionally, represses a number of genes involved in the response to DNA damage (SOS response), including recA and lexA. In the presence of single-stranded DNA, RecA interacts with LexA causing an autocatalytic cleavage which disrupts the DNA-binding part of LexA, leading to derepression of the SOS regulon and eventually DNA repair. In Ralstonia nicotianae (strain ATCC BAA-1114 / GMI1000) (Ralstonia solanacearum), this protein is LexA repressor.